Consider the following 454-residue polypeptide: Probable tRNA methyltransferase 9B (454 aa).

The residue at position 214 (Ser214) is a Phosphoserine.

This sequence belongs to the methyltransferase superfamily. As to expression, down-regulated in breast, bladder, colorectal, cervix and testicular carcinomas.

Functionally, may modify wobble uridines in specific arginine and glutamic acid tRNAs. Acts as a tumor suppressor by promoting the expression of LIN9. The protein is Probable tRNA methyltransferase 9B of Homo sapiens (Human).